Consider the following 197-residue polypeptide: Small ribosomal subunit protein uS4 (197 aa).

Positions 87–147 (LRLDNVLFRL…EKSKSSARYK (61 aa)) constitute an S4 RNA-binding domain.

Belongs to the universal ribosomal protein uS4 family. In terms of assembly, part of the 30S ribosomal subunit. Contacts protein S5. The interaction surface between S4 and S5 is involved in control of translational fidelity.

Its function is as follows. One of the primary rRNA binding proteins, it binds directly to 16S rRNA where it nucleates assembly of the body of the 30S subunit. In terms of biological role, with S5 and S12 plays an important role in translational accuracy. The polypeptide is Small ribosomal subunit protein uS4 (Lachnospira eligens (strain ATCC 27750 / DSM 3376 / VPI C15-48 / C15-B4) (Eubacterium eligens)).